Consider the following 251-residue polypeptide: MAVHLLIVDALNLIRRIHAVQGSPCVETCQHALDQLIMHSQPTHAVAVFDDENRSSGWRHQRLPDYKAGRPPMPEELHNEMPALRAAFEQRGVPCWSASGNEADDLAATLAVKVTQAGHQATIVSTDKGYCQLLSPTLRIRDYFQKRWLDAPFIDKEFGVQPQQLPDYWGLAGISSSKVPGVAGIGPKSATQLLVEFQSLEGIYENLDAVAEKWRKKLENHKEMAFLCRDIARLQTDLHIDGNLQQLRLVR.

Asp-104 contacts Mg(2+). The 5'-3' exonuclease domain maps to Val-160–Leu-249. Residues Leu-171, Ala-172, Pro-180, Val-182, and Ile-185 each coordinate K(+). Residues Gly-184–Ser-189 are interaction with DNA.

Belongs to the Xni family. Mg(2+) is required as a cofactor. It depends on K(+) as a cofactor.

In terms of biological role, has flap endonuclease activity. During DNA replication, flap endonucleases cleave the 5'-overhanging flap structure that is generated by displacement synthesis when DNA polymerase encounters the 5'-end of a downstream Okazaki fragment. This Escherichia coli O6:K15:H31 (strain 536 / UPEC) protein is Flap endonuclease Xni.